Here is a 38-residue protein sequence, read N- to C-terminus: Photosystem II reaction center protein L (38 aa).

The chain crosses the membrane as a helical span at residues 17–37; that stretch reads SLFLGRLLIFVLGILFSSYIF.

This sequence belongs to the PsbL family. In terms of assembly, PSII is composed of 1 copy each of membrane proteins PsbA, PsbB, PsbC, PsbD, PsbE, PsbF, PsbH, PsbI, PsbJ, PsbK, PsbL, PsbM, PsbT, PsbX, PsbY, PsbZ, Psb30/Ycf12, peripheral proteins PsbO, CyanoQ (PsbQ), PsbU, PsbV and a large number of cofactors. It forms dimeric complexes.

The protein localises to the cellular thylakoid membrane. Functionally, one of the components of the core complex of photosystem II (PSII). PSII is a light-driven water:plastoquinone oxidoreductase that uses light energy to abstract electrons from H(2)O, generating O(2) and a proton gradient subsequently used for ATP formation. It consists of a core antenna complex that captures photons, and an electron transfer chain that converts photonic excitation into a charge separation. This subunit is found at the monomer-monomer interface and is required for correct PSII assembly and/or dimerization. In Prochlorothrix hollandica, this protein is Photosystem II reaction center protein L.